Consider the following 84-residue polypeptide: Esculentin-1SIa (84 aa).

The signal sequence occupies residues 1–22; it reads MFTLKKPLLLIVLLGIISLSLC. The propeptide at 23-36 is removed in mature form; it reads EQERAADEDEGSEI. A disulfide bridge links Cys78 with Cys84.

In terms of tissue distribution, expressed by the skin glands.

It localises to the secreted. Its function is as follows. Has antimicrobial activity against Gram-negative bacterium E.coli ATCC 8739 (MIC=6.3 ug), against Gram positive bacteria S.aureus ATCC 6538 (MIC=3.1 ug), methicillin-resistant S.aureus ATCC 43300 (MIC=25 ug) and B.subtilis ATCC 6633 (MIC=25 ug). Has no activity against fungus C.albicans ATCC 90028. The sequence is that of Esculentin-1SIa from Odorrana ishikawae (Ishikawa's frog).